The chain runs to 351 residues: S-adenosylmethionine:tRNA ribosyltransferase-isomerase (351 aa).

This sequence belongs to the QueA family. As to quaternary structure, monomer.

It localises to the cytoplasm. The enzyme catalyses 7-aminomethyl-7-carbaguanosine(34) in tRNA + S-adenosyl-L-methionine = epoxyqueuosine(34) in tRNA + adenine + L-methionine + 2 H(+). It participates in tRNA modification; tRNA-queuosine biosynthesis. Its function is as follows. Transfers and isomerizes the ribose moiety from AdoMet to the 7-aminomethyl group of 7-deazaguanine (preQ1-tRNA) to give epoxyqueuosine (oQ-tRNA). The chain is S-adenosylmethionine:tRNA ribosyltransferase-isomerase from Fusobacterium nucleatum subsp. nucleatum (strain ATCC 25586 / DSM 15643 / BCRC 10681 / CIP 101130 / JCM 8532 / KCTC 2640 / LMG 13131 / VPI 4355).